We begin with the raw amino-acid sequence, 226 residues long: Probable proteasome subunit beta type-1 (226 aa).

A propeptide spans 1–24 (removed in mature form); the sequence is MATTVKDTMNVDINAIKKGEIRMG. T25 acts as the Nucleophile in catalysis.

It belongs to the peptidase T1B family. The 26S proteasome consists of a 20S proteasome core and two 19S regulatory subunits. The 20S proteasome core is composed of 28 subunits that are arranged in four stacked rings, resulting in a barrel-shaped structure. The two end rings are each formed by seven alpha subunits, and the two central rings are each formed by seven beta subunits. The catalytic chamber with the active sites is on the inside of the barrel.

The protein resides in the cytoplasm. It is found in the nucleus. It carries out the reaction Cleavage of peptide bonds with very broad specificity.. The proteasome is a multicatalytic proteinase complex which is characterized by its ability to cleave peptides with Arg, Phe, Tyr, Leu, and Glu adjacent to the leaving group at neutral or slightly basic pH. The proteasome has an ATP-dependent proteolytic activity. The chain is Probable proteasome subunit beta type-1 (pre3) from Schizosaccharomyces pombe (strain 972 / ATCC 24843) (Fission yeast).